The sequence spans 498 residues: Resveratrol cleavage oxygenase 1 (498 aa).

Piceatannol-binding residues include Tyr105 and Lys136. Trans-resveratrol contacts are provided by Tyr105 and Lys136. Fe cation contacts are provided by His169, His220, and His285. Glu355 lines the piceatannol pocket. Residue Glu355 participates in trans-resveratrol binding. His481 is a Fe cation binding site.

Belongs to the carotenoid oxygenase family. Fe(2+) serves as cofactor.

The enzyme catalyses trans-resveratrol + O2 = 3,5-dihydroxybenzaldehyde + 4-hydroxybenzaldehyde. It catalyses the reaction piceatannol + O2 = 3,5-dihydroxybenzaldehyde + 3,4-dihydroxybenzaldehyde. Functionally, dioxygenase that cleaves the interphenyl C-alpha-C-beta double bond of resveratrol to yield 3,5-dihydroxybenzaldehyde and 4-hydroxybenzaldehyde. Also cleaves piceatannol, a compound that differs from resveratrol only in the occurrence of an additional hydroxyl group, which leads to the production of 3,4-dihydroxybenzaldehyde and 3,5-hydroxybenzaldehyde. The chain is Resveratrol cleavage oxygenase 1 from Aspergillus fumigatus (strain ATCC MYA-4609 / CBS 101355 / FGSC A1100 / Af293) (Neosartorya fumigata).